We begin with the raw amino-acid sequence, 137 residues long: Cellular retinoic acid-binding protein 1 (137 aa).

The Nuclear localization signal signature appears at Lys21–Lys31. All-trans-retinoate is bound at residue Arg132–Tyr134.

Belongs to the calycin superfamily. Fatty-acid binding protein (FABP) family.

Its subcellular location is the cytoplasm. Its function is as follows. Cytosolic CRABPs may regulate the access of retinoic acid to the nuclear retinoic acid receptors. The sequence is that of Cellular retinoic acid-binding protein 1 (crabp1) from Hippocampus comes (Tiger tail seahorse).